The following is a 136-amino-acid chain: Large-conductance mechanosensitive channel (136 aa).

Helical transmembrane passes span 10 to 30 (FAMR…AAFG) and 76 to 96 (GSFI…FSAV).

This sequence belongs to the MscL family. Homopentamer.

Its subcellular location is the cell inner membrane. In terms of biological role, channel that opens in response to stretch forces in the membrane lipid bilayer. May participate in the regulation of osmotic pressure changes within the cell. The protein is Large-conductance mechanosensitive channel of Yersinia enterocolitica serotype O:8 / biotype 1B (strain NCTC 13174 / 8081).